The sequence spans 385 residues: tRNA-specific 2-thiouridylase MnmA (385 aa).

Residues 8–15 (AMSGGVDS) and leucine 34 contribute to the ATP site. The Nucleophile role is filled by cysteine 102. A disulfide bridge connects residues cysteine 102 and cysteine 200. Glycine 126 lines the ATP pocket. The tract at residues 150–152 (KDQ) is interaction with tRNA. The active-site Cysteine persulfide intermediate is the cysteine 200. The interaction with tRNA stretch occupies residues 307 to 308 (RY).

Belongs to the MnmA/TRMU family.

The protein localises to the cytoplasm. It catalyses the reaction S-sulfanyl-L-cysteinyl-[protein] + uridine(34) in tRNA + AH2 + ATP = 2-thiouridine(34) in tRNA + L-cysteinyl-[protein] + A + AMP + diphosphate + H(+). In terms of biological role, catalyzes the 2-thiolation of uridine at the wobble position (U34) of tRNA, leading to the formation of s(2)U34. The protein is tRNA-specific 2-thiouridylase MnmA of Heliobacterium modesticaldum (strain ATCC 51547 / Ice1).